The chain runs to 436 residues: CaM kinase-like vesicle-associated protein (436 aa).

A Protein kinase domain is found at 24–286 (YDLGQIVKSE…AQEAINHEWI (263 aa)). The tract at residues 328 to 436 (APENQTAAAT…ALDTVEEQSG (109 aa)) is disordered. The segment covering 333-409 (TAAATAPAAE…QPPAEPVVHV (77 aa)) has biased composition (low complexity).

Belongs to the protein kinase superfamily. CAMK Ser/Thr protein kinase family. As to quaternary structure, interacts with calmodulin, in the presence of calcium. Requires Ca(2+) as cofactor.

Its subcellular location is the cytoplasmic vesicle membrane. Does not appear to have detectable kinase activity. The polypeptide is CaM kinase-like vesicle-associated protein (camkv) (Danio rerio (Zebrafish)).